Reading from the N-terminus, the 1024-residue chain is Myosin phosphatase Rho-interacting protein (1024 aa).

The tract at residues 1–382 (MSAAKENPCR…DRRSTESSMT (382 aa)) is interaction with F-actin. The PH 1 domain occupies 43–150 (KPIYGGWLLL…WLEMLMVYPR (108 aa)). Residues 152–262 (NKQNQKKKRK…GDRVDGGRKV (111 aa)) are disordered. The span at 179–190 (SSSGGSSGSSSS) shows a compositional bias: low complexity. S193, S219, S221, S225, and S227 each carry phosphoserine. A compositionally biased stretch (low complexity) spans 221-233 (SPAQSPSQSQPPA). Residues 240–262 (PGLESKEDESTISGDRVDGGRKV) are compositionally biased toward basic and acidic residues. A phosphoserine mark is found at S266, S270, S289, and S292. Disordered regions lie at residues 274-301 (AKQD…SRRS) and 328-379 (PSSD…STES). The residue at position 295 (T295) is a Phosphothreonine. Positions 333 to 349 (RQGRSERRAIPRKRDFA) are enriched in basic and acidic residues. S364 is modified (phosphoserine). A PH 2 domain is found at 386–482 (LNFKKGWLTK…WIQTIMKHVL (97 aa)). Residues 486–583 (APDVTSSLPE…AEPGELERER (98 aa)) form a disordered region. Over residues 488–508 (DVTSSLPEGKNKSTSFETCSR) the composition is skewed to polar residues. Position 492 is a phosphoserine (S492). A compositionally biased stretch (basic and acidic residues) spans 522-545 (PEQKKSRARERRREGRSKTFDWAE). The segment at 545 to 823 (EFRPIQQALA…SVQRELEVLS (279 aa)) is interaction with RHOA. A Phosphoserine modification is found at S617. Phosphothreonine is present on T645. The stretch at 672–976 (HELTSLLEKE…AATEALGEKS (305 aa)) forms a coiled coil. S799 is subject to Phosphoserine. The interval 823–878 (SEQYSQKCLENAHLAQALEAERQALRQCQRENQELNAHNQELNNRLAAEITRLRTL) is interaction with PPP1R12A. The tract at residues 972–995 (LGEKSPEGTTVSGYDIMKSKSNPD) is disordered. Residues S976, G979, S992, S1013, and S1015 each carry the phosphoserine modification.

Binds RHOA, PPP1R12A/MBS and PPP1R12C/MBS85 through adjacent coiled coil domains. Interacts with MYZAP. Binds F-actin through its N-terminus. In terms of tissue distribution, expressed in Kidney, Brain, Heart and Lung.

It localises to the cytoplasm. Its subcellular location is the cytoskeleton. Targets myosin phosphatase to the actin cytoskeleton. Required for the regulation of the actin cytoskeleton by RhoA and ROCK1. Depletion leads to an increased number of stress fibers in smooth muscle cells through stabilization of actin fibers by phosphorylated myosin. Overexpression of MRIP as well as its F-actin-binding region leads to disassembly of stress fibers in neuronal cells. The sequence is that of Myosin phosphatase Rho-interacting protein (Mprip) from Mus musculus (Mouse).